The following is a 215-amino-acid chain: UPF0502 protein YceH (215 aa).

Lys80 is modified (N6-acetyllysine).

Belongs to the UPF0502 family.

The polypeptide is UPF0502 protein YceH (Escherichia coli O81 (strain ED1a)).